Reading from the N-terminus, the 473-residue chain is Bifunctional protein HldE (473 aa).

Residues 1-317 (MKLSMPRFDQ…RRAIQREEGS (317 aa)) are ribokinase. Residue 194–197 (NLSE) participates in ATP binding. Asp-263 is a catalytic residue. The interval 343–473 (FTNGCFDILH…TAIVEKIRKN (131 aa)) is cytidylyltransferase.

The protein in the N-terminal section; belongs to the carbohydrate kinase PfkB family. This sequence in the C-terminal section; belongs to the cytidylyltransferase family. In terms of assembly, homodimer.

The enzyme catalyses D-glycero-beta-D-manno-heptose 7-phosphate + ATP = D-glycero-beta-D-manno-heptose 1,7-bisphosphate + ADP + H(+). It carries out the reaction D-glycero-beta-D-manno-heptose 1-phosphate + ATP + H(+) = ADP-D-glycero-beta-D-manno-heptose + diphosphate. It functions in the pathway nucleotide-sugar biosynthesis; ADP-L-glycero-beta-D-manno-heptose biosynthesis; ADP-L-glycero-beta-D-manno-heptose from D-glycero-beta-D-manno-heptose 7-phosphate: step 1/4. Its pathway is nucleotide-sugar biosynthesis; ADP-L-glycero-beta-D-manno-heptose biosynthesis; ADP-L-glycero-beta-D-manno-heptose from D-glycero-beta-D-manno-heptose 7-phosphate: step 3/4. Functionally, catalyzes the phosphorylation of D-glycero-D-manno-heptose 7-phosphate at the C-1 position to selectively form D-glycero-beta-D-manno-heptose-1,7-bisphosphate. Catalyzes the ADP transfer from ATP to D-glycero-beta-D-manno-heptose 1-phosphate, yielding ADP-D-glycero-beta-D-manno-heptose. The sequence is that of Bifunctional protein HldE from Pseudomonas putida (strain W619).